The sequence spans 216 residues: Thymidylate kinase (216 aa).

10 to 17 (GPDGAGKS) contributes to the ATP binding site.

The protein belongs to the thymidylate kinase family.

The enzyme catalyses dTMP + ATP = dTDP + ADP. Phosphorylation of dTMP to form dTDP in both de novo and salvage pathways of dTTP synthesis. This Lactobacillus acidophilus (strain ATCC 700396 / NCK56 / N2 / NCFM) protein is Thymidylate kinase.